Reading from the N-terminus, the 1646-residue chain is MSINAVDSKKLVEALLGDLRLLSQEAKKKQNHVKEAAESGVVRIRNISTASVGDTVLITNLRAACTELLHPLVLSCETRHTRLVQIALQGIQRLVQHRILSQNGATIVTNELWSLVEAECEELRVLQTVPPLVSSELIVTGNTLAKCIVMCFRLHFAKDPIVINAASAAVRQLVSTVFERVIQEDGIFSTELTVVNPSGGRPSPRAAPPTLRPCAADAYMLFKDLCLLINGEAPIWLVGIQETTRTLGLELLESLLKGFPSVFIRHTEFGDLLKDDVCPLIIRLFSPNVKAMHISSQHPSSRTSNASFNNYPPTISHERQSFPISMRLVRIVTLIVQFYQTILHTECEIFISTLLKFVDGDRKGWQRPLALESLHRIVSSTDLVKWMTESFDCRPNSTHVLEQVAIGLSTVVQQCLVCTTFSSDQENEIDRSQEDGGPGFLSKGLWVPYVEHLTSKKTILLDSLDRMDAVAIPEGYVLSRCCVALCDMTQAVYAAIDKLCLVDENSEAGSSETKLEIAKVAYANSQPSILAAIGSLLAASTDEIVSDQLLCCLSTLISAGCRVGADADLHRSVYVLAIMSLPSPSYLNQFAGIAPPSPANKRDAPVSEQVFDLEAWPSTTQVTASGPPCPCPVVSTELWNKQVLLTSKNLQAARTFIASITTHIKELNNLWYLCMATCEHLSWLLAMRPTQVGQFERETRDDHSNVPTVVTNAALSDIAMLSSLMDKVAPAIAALPDKSFLSVIDALIRLSDESLAVAATGRESSLFPLAVLYKVCSLSLMRLQVFWQKAANHFIKVCNHTSVSMRDWAAVALTSLAKHAVKSKTSMDAKSQQEMIISSLLALCSIPHIQVRRRQLDCVMSLMQTDGAFLLSTSWPNVIQIISAIIDSDTECELSLVRQGYLGLRLVSSDFLQSIPFDCISGLVEAISRYSKQNTDQNISLSALTLLWTISDFIYRKMESVGNDASEAVWMVLYTCLSESCVDSRFAVRKSACQTLLQTVTAHGHALRSAAWHSVIWQIMIPLLDKVRSQTRCASTEKSNGELIMHHSRDTEQKQWTETCIHTISAISKIFNSQRKSLLALNDFGAVWEAFLGYLDWAACYENAELSLSAIRSYQEVLLGKISSQTLNVNSHEKSNGSDSTIDAITPELPQAQWVESWKVWLRISRGLARQGCAAMANSVNADSKSISSTPRMNSSSSSLASLAPGIYVPGPSHLTAILHVFPPLFDKVAKSITVDDLKYESLPAVLESMMNVPIPSEQAPFVLPSATTHLTPTQEALLEAVKIVFVECTLSGTSLRAAIPDQIRLLLKFASMATQRISPNKVAPGGQKSYRDYALTTIVPFSEYSLRIAIEFFTSTSQNPEVANSLIAIDIIKFLGEPLYMKYTCISASTWKLAATSLMSVLRTSIPYARQNPEVFRGLWSAICDTMERWLFTPNKSTRLAADERKRDELMECQAIEIIRSEMLAYASRLPQEDVQRLIALLHRGSISQIDSTDVLDSHTQRNELAKACFDALLMSSDGAHTNTEEDEGRGILGNVAVTSLLQRCTQVMSDFCKDWSAAGDLRLPRSRILEIISALQAVDSLIARLARDPKMTELYSHLVSLFPSVVDVMPCCHADPQLEHQLIKTIKSYQTLFLLQNIPQATVE.

Belongs to the MON2 family.

Its subcellular location is the golgi apparatus. In terms of biological role, may be required for traffic between late Golgi and early endosomes. The chain is Monensin-resistant homolog 2 (mon-2) from Caenorhabditis elegans.